Reading from the N-terminus, the 139-residue chain is FAD synthase (139 aa).

ATP-binding positions include 9-10, 14-17, and aspartate 92; these read TF and HPGH.

It belongs to the archaeal FAD synthase family. Homodimer. The cofactor is a divalent metal cation.

The catalysed reaction is FMN + ATP + H(+) = FAD + diphosphate. Its pathway is cofactor biosynthesis; FAD biosynthesis; FAD from FMN: step 1/1. Its function is as follows. Catalyzes the transfer of the AMP portion of ATP to flavin mononucleotide (FMN) to produce flavin adenine dinucleotide (FAD) coenzyme. The protein is FAD synthase of Methanosarcina barkeri (strain Fusaro / DSM 804).